We begin with the raw amino-acid sequence, 295 residues long: Elongation factor Ts (295 aa).

The tract at residues 79 to 82 (TDFV) is involved in Mg(2+) ion dislocation from EF-Tu.

It belongs to the EF-Ts family.

Its subcellular location is the cytoplasm. In terms of biological role, associates with the EF-Tu.GDP complex and induces the exchange of GDP to GTP. It remains bound to the aminoacyl-tRNA.EF-Tu.GTP complex up to the GTP hydrolysis stage on the ribosome. The protein is Elongation factor Ts of Bacillus cereus (strain ATCC 10987 / NRS 248).